The chain runs to 237 residues: Phosphoribosylaminoimidazole-succinocarboxamide synthase (237 aa).

The protein belongs to the SAICAR synthetase family.

It carries out the reaction 5-amino-1-(5-phospho-D-ribosyl)imidazole-4-carboxylate + L-aspartate + ATP = (2S)-2-[5-amino-1-(5-phospho-beta-D-ribosyl)imidazole-4-carboxamido]succinate + ADP + phosphate + 2 H(+). It participates in purine metabolism; IMP biosynthesis via de novo pathway; 5-amino-1-(5-phospho-D-ribosyl)imidazole-4-carboxamide from 5-amino-1-(5-phospho-D-ribosyl)imidazole-4-carboxylate: step 1/2. The polypeptide is Phosphoribosylaminoimidazole-succinocarboxamide synthase (Pseudomonas fluorescens (strain SBW25)).